Reading from the N-terminus, the 194-residue chain is MTIKLIVGLANPGAEYAATRHNAGAWFVDLLAERLRAPLREEAKFFGYTSRVTLGGEDVRLLVPTTFMNLSGKAVAAMASFFRINPDEILVAHDELDLPPGVAKFKLGGGHGGHNGLKDIISKLGNNPNFHRLRIGIGHPGDKNKVVGFVLGKPPVSEQKLIDEAIDEAARCTEMWFTDGLTKATNRLHAFKAQ.

Position 16 (Tyr-16) interacts with tRNA. His-21 serves as the catalytic Proton acceptor. Positions 67, 69, and 115 each coordinate tRNA.

The protein belongs to the PTH family. In terms of assembly, monomer.

Its subcellular location is the cytoplasm. The catalysed reaction is an N-acyl-L-alpha-aminoacyl-tRNA + H2O = an N-acyl-L-amino acid + a tRNA + H(+). Hydrolyzes ribosome-free peptidyl-tRNAs (with 1 or more amino acids incorporated), which drop off the ribosome during protein synthesis, or as a result of ribosome stalling. In terms of biological role, catalyzes the release of premature peptidyl moieties from peptidyl-tRNA molecules trapped in stalled 50S ribosomal subunits, and thus maintains levels of free tRNAs and 50S ribosomes. This chain is Peptidyl-tRNA hydrolase, found in Escherichia coli O81 (strain ED1a).